The chain runs to 474 residues: UDP-glycosyltransferase 71E1 (474 aa).

Residues Ser-275, 341–342 (WA), 359–367 (HCGWNSTLE), and 381–384 (YAEQ) each bind UDP-alpha-D-glucose.

This sequence belongs to the UDP-glycosyltransferase family.

May glycosylate diterpenes or flavonols in leaves. The protein is UDP-glycosyltransferase 71E1 of Stevia rebaudiana (Stevia).